The following is a 528-amino-acid chain: Probable methylmalonate-semialdehyde/malonate-semialdehyde dehydrogenase [acylating], mitochondrial (528 aa).

The transit peptide at 1-26 directs the protein to the mitochondrion; the sequence is MLSFKFAKSASKVIGNRNFHSSSASL. Phenylalanine 175, lysine 199, glutamate 202, and arginine 203 together coordinate NAD(+). The active-site Nucleophile is cysteine 307. Glutamate 408 contacts NAD(+).

It belongs to the aldehyde dehydrogenase family. As to quaternary structure, homotetramer.

Its subcellular location is the mitochondrion. It carries out the reaction 2-methyl-3-oxopropanoate + NAD(+) + CoA + H2O = propanoyl-CoA + hydrogencarbonate + NADH + H(+). The catalysed reaction is 3-oxopropanoate + NAD(+) + CoA + H2O = hydrogencarbonate + acetyl-CoA + NADH + H(+). Its function is as follows. Probable malonate and methylmalonate semialdehyde dehydrogenase involved in the catabolism of valine, thymine, and compounds catabolized by way of beta-alanine, including uracil and cytidine. The chain is Probable methylmalonate-semialdehyde/malonate-semialdehyde dehydrogenase [acylating], mitochondrial (mmsdh) from Dictyostelium discoideum (Social amoeba).